The following is a 391-amino-acid chain: Chaperone protein DnaJ (391 aa).

Positions 2–67 (DYYDVLGVSK…QKRESYDRYG (66 aa)) constitute a J domain. The CR-type zinc-finger motif lies at 148-226 (GVEKELLVSG…CRGQGRVKDK (79 aa)). 8 residues coordinate Zn(2+): cysteine 161, cysteine 164, cysteine 178, cysteine 181, cysteine 200, cysteine 203, cysteine 214, and cysteine 217. CXXCXGXG motif repeat units follow at residues 161–168 (CTTCSGSG), 178–185 (CERCKGSG), 200–207 (CPECGGEG), and 214–221 (CSNCRGQG).

This sequence belongs to the DnaJ family. In terms of assembly, homodimer. Requires Zn(2+) as cofactor.

The protein localises to the cytoplasm. In terms of biological role, participates actively in the response to hyperosmotic and heat shock by preventing the aggregation of stress-denatured proteins and by disaggregating proteins, also in an autonomous, DnaK-independent fashion. Unfolded proteins bind initially to DnaJ; upon interaction with the DnaJ-bound protein, DnaK hydrolyzes its bound ATP, resulting in the formation of a stable complex. GrpE releases ADP from DnaK; ATP binding to DnaK triggers the release of the substrate protein, thus completing the reaction cycle. Several rounds of ATP-dependent interactions between DnaJ, DnaK and GrpE are required for fully efficient folding. Also involved, together with DnaK and GrpE, in the DNA replication of plasmids through activation of initiation proteins. The protein is Chaperone protein DnaJ of Chlamydia felis (strain Fe/C-56) (Chlamydophila felis).